Here is a 255-residue protein sequence, read N- to C-terminus: Large ribosomal subunit protein uL4 (255 aa).

This sequence belongs to the universal ribosomal protein uL4 family. Part of the 50S ribosomal subunit.

Its function is as follows. One of the primary rRNA binding proteins, this protein initially binds near the 5'-end of the 23S rRNA. It is important during the early stages of 50S assembly. It makes multiple contacts with different domains of the 23S rRNA in the assembled 50S subunit and ribosome. Functionally, forms part of the polypeptide exit tunnel. In Thermococcus gammatolerans (strain DSM 15229 / JCM 11827 / EJ3), this protein is Large ribosomal subunit protein uL4.